The primary structure comprises 794 residues: Inactive zinc metalloprotease C354.09c (794 aa).

The disordered stretch occupies residues 1 to 56 (MTDEKHVYVPPPKDPPSYEEVALHSALNNSAPPNDGEQNETSMEEMEIIEPPSEDS). A helical transmembrane segment spans residues 91-111 (IPFQFLYLAVIATVIILASYY).

It belongs to the peptidase M28 family. M28B subfamily.

Its subcellular location is the membrane. This chain is Inactive zinc metalloprotease C354.09c, found in Schizosaccharomyces pombe (strain 972 / ATCC 24843) (Fission yeast).